Consider the following 134-residue polypeptide: Perlwapin (134 aa).

3 consecutive WAP domains span residues 2–45 (GPNL…CVPK), 46–89 (PKPG…YRPE), and 90–132 (KPGS…EKPC). Intrachain disulfides connect C8/C34, C17/C38, C21/C33, C27/C42, C51/C77, C59/C82, C64/C76, C70/C85, C94/C121, C104/C124, C108/C120, and C114/C128.

Nacreous layer of shell.

Functionally, inhibits growth of calcium carbonate crystals. May inhibit growth of certain crystallographic planes in the mineral phase of nacre in the shell. The sequence is that of Perlwapin from Haliotis laevigata (Smooth Australian abalone).